Consider the following 290-residue polypeptide: ATP synthase gamma chain (290 aa).

It belongs to the ATPase gamma chain family. F-type ATPases have 2 components, CF(1) - the catalytic core - and CF(0) - the membrane proton channel. CF(1) has five subunits: alpha(3), beta(3), gamma(1), delta(1), epsilon(1). CF(0) has three main subunits: a, b and c.

Its subcellular location is the cell membrane. In terms of biological role, produces ATP from ADP in the presence of a proton gradient across the membrane. The gamma chain is believed to be important in regulating ATPase activity and the flow of protons through the CF(0) complex. This chain is ATP synthase gamma chain, found in Wolbachia sp. subsp. Brugia malayi (strain TRS).